The sequence spans 265 residues: Type III pantothenate kinase (265 aa).

9–16 (DAGNSRIK) contributes to the ATP binding site. Substrate-binding positions include Y96 and 103 to 106 (GSDR). Residue D105 is the Proton acceptor of the active site. T129 contacts ATP. Residue T189 coordinates substrate.

Belongs to the type III pantothenate kinase family. As to quaternary structure, homodimer. NH4(+) is required as a cofactor. K(+) serves as cofactor.

It localises to the cytoplasm. It catalyses the reaction (R)-pantothenate + ATP = (R)-4'-phosphopantothenate + ADP + H(+). It functions in the pathway cofactor biosynthesis; coenzyme A biosynthesis; CoA from (R)-pantothenate: step 1/5. Its function is as follows. Catalyzes the phosphorylation of pantothenate (Pan), the first step in CoA biosynthesis. The protein is Type III pantothenate kinase of Burkholderia orbicola (strain AU 1054).